A 311-amino-acid polypeptide reads, in one-letter code: Ribonuclease HIII (311 aa).

The RNase H type-2 domain maps to 95–311 (MSIVGSDEVG…NTEKAFRLLK (217 aa)). A divalent metal cation contacts are provided by Asp101, Glu102, and Asp206.

This sequence belongs to the RNase HII family. RnhC subfamily. The cofactor is Mn(2+). Mg(2+) serves as cofactor.

It localises to the cytoplasm. The enzyme catalyses Endonucleolytic cleavage to 5'-phosphomonoester.. In terms of biological role, endonuclease that specifically degrades the RNA of RNA-DNA hybrids. This Bacillus cereus (strain 03BB102) protein is Ribonuclease HIII.